We begin with the raw amino-acid sequence, 74 residues long: Metallothionein-like protein type 2 (74 aa).

Belongs to the metallothionein superfamily. Type 15 family.

Its function is as follows. Metallothioneins have a high content of cysteine residues that bind various heavy metals. The polypeptide is Metallothionein-like protein type 2 (Nicotiana plumbaginifolia (Leadwort-leaved tobacco)).